The following is a 708-amino-acid chain: ATP-dependent DNA helicase Hel308 (708 aa).

The Q motif signature appears at 1–29 (MSIDDLKLPSNVIDIIKNRGIKKLNPPQT). ATP-binding positions include glutamine 28 and 46 to 53 (SPTGSGKT). A Helicase ATP-binding domain is found at 33–196 (KKGLLDGNRL…WLGAEPVATN (164 aa)). The DEAH box signature appears at 145-148 (DELH). Residues 229-435 (HGDDAIIAYT…ERAFYTFLLG (207 aa)) enclose the Helicase C-terminal domain.

The protein belongs to the helicase family. Hel308 subfamily. Monomer.

It catalyses the reaction Couples ATP hydrolysis with the unwinding of duplex DNA by translocating in the 3'-5' direction.. The catalysed reaction is ATP + H2O = ADP + phosphate + H(+). Its function is as follows. DNA-dependent ATPase and 3'-5' DNA helicase that may be involved in repair of stalled replication forks. This is ATP-dependent DNA helicase Hel308 from Saccharolobus solfataricus (strain ATCC 35092 / DSM 1617 / JCM 11322 / P2) (Sulfolobus solfataricus).